Here is a 279-residue protein sequence, read N- to C-terminus: Protein ABIL4 (279 aa).

2 disordered regions span residues 192 to 211 (VHNN…PMRF) and 219 to 241 (LLKR…EPQR). The segment covering 194–208 (NNINNRTPNKRSNSP) has biased composition (polar residues). Residues 219 to 228 (LLKRSSSPSQ) are compositionally biased toward low complexity.

It belongs to the ABI family. In terms of assembly, binds SCAR.

It localises to the cytoplasm. The protein localises to the cytoskeleton. Functionally, involved in regulation of actin and microtubule organization. Part of a WAVE complex that activates the Arp2/3 complex. The chain is Protein ABIL4 (ABIL4) from Arabidopsis thaliana (Mouse-ear cress).